A 224-amino-acid polypeptide reads, in one-letter code: Agamous-like MADS-box protein AGL9 homolog (224 aa).

One can recognise an MADS-box domain in the interval arginine 3 to phenylalanine 57. Residues glutamate 89 to leucine 179 form the K-box domain.

In terms of tissue distribution, flower specific.

It is found in the nucleus. In terms of biological role, probable transcription factor active in inflorescence development and floral organogenesis. In Solanum lycopersicum (Tomato), this protein is Agamous-like MADS-box protein AGL9 homolog (TDR5).